We begin with the raw amino-acid sequence, 736 residues long: MASIVEGPLSKWTNVMKGWQYRWFVLDYNAGLLSYYTSKDKMMRGSRRGCVRLRGAVIGIDDEDDSTFTITVDQKTFHFQARDADEREKWIHALEETILRHTLQLQGLDSGFIPSVQDFDKKLTEADAYLQILIEQLKLFDDKLQNCKDDEQRKKVETLKDTTNSMVESIKHCIVLLQIAKDQSNAEQHADGIISTINPVDAIYQPSPLEPVISTMPSQTALPPEPAQLCKSEQRPSSLPVGPVLATLGHHQTPTPNSTGSGNSPPSSSLTPPSHVNLSPNTVPEFSYSSSEDEFYDADEFHQSGSSPKRLIDSSGSASVLTHSSSGNSLKRPDTTESLNSSMSNGTSDADLFDSHDDRDDDGEAGSVEEHKSVIMHLLSQVRLGMDLTKVVLPTFILERRSLLEMYADFFAHPDLFVSISDQKDPRDRMVQVVKWYLSAFHAGRRGSVAKKPYNPILGEIFQCHWTLPNDTEENAELVSEGPVPWVSKNSVTFVAEQVSHHPPISAFYAECFNKKIQFNAHIWTKSKFLGMSIGVHNIGQGCVSCLEYDEHYILTFPNGYGRSILTVPWVELGGECNINCSKTGYSANIVFHTKPFYGGKKHRITAEIFSPNDKKSFCSIEGEWNGIMYAKYATGENTVFVDTKKLPIIKKKVRKLEDQNEYESRSLWKDVTFNLKIRDIDAATEAKHRLEERQRAEARERKEKEIQWETRLFHEDGECWVYDEPLLKRLGAVKH.

A2 is modified (N-acetylalanine). A PH domain is found at A2–L99. The disordered stretch occupies residues L209–V368. Over residues T253–S274 the composition is skewed to low complexity. S306, S324, S325, S326, and S329 each carry phosphoserine. Polar residues-rich tracts occupy residues S314–S329 and T336–S348. A Phosphoserine modification is found at S611.

This sequence belongs to the OSBP family. As to quaternary structure, heterodimer with OSBPL11. Interacts with OSBPL10.

It localises to the late endosome membrane. The protein resides in the golgi apparatus. It is found in the trans-Golgi network membrane. The catalysed reaction is a 1,2-diacyl-sn-glycero-3-phospho-(1D-myo-inositol 4-phosphate)(out) + a 1,2-diacyl-sn-glycero-3-phospho-L-serine(in) = a 1,2-diacyl-sn-glycero-3-phospho-(1D-myo-inositol 4-phosphate)(in) + a 1,2-diacyl-sn-glycero-3-phospho-L-serine(out). Functionally, interacts with OSBPL11 to function as lipid transfer proteins. Together they form a heterodimer that localizes at the ER-trans-Golgi membrane contact sites, and exchanges phosphatidylserine (1,2-diacyl-sn-glycero-3-phospho-L-serine, PS) for phosphatidylinositol-4-phosphate (1,2-diacyl-sn-glycero-3-phospho-(1D-myo-inositol 4-phosphate), PI(4)P) between the two organelles, a step that is critical for sphingomyelin synthesis in the Golgi complex. The sequence is that of Oxysterol-binding protein-related protein 9 (Osbpl9) from Mus musculus (Mouse).